The following is a 121-amino-acid chain: Putative iron-sulfur cluster insertion protein ErpA (121 aa).

Iron-sulfur cluster contacts are provided by Cys-49, Cys-113, and Cys-115.

Belongs to the HesB/IscA family. Homodimer. Requires iron-sulfur cluster as cofactor.

Functionally, required for insertion of 4Fe-4S clusters. This chain is Putative iron-sulfur cluster insertion protein ErpA, found in Paraburkholderia phymatum (strain DSM 17167 / CIP 108236 / LMG 21445 / STM815) (Burkholderia phymatum).